The primary structure comprises 677 residues: UPF0313 protein RPA0679 (677 aa).

The Radical SAM core domain maps to 335 to 601 (AWDMIKTSVT…VEAIKGLRQR (267 aa)). [4Fe-4S] cluster is bound by residues cysteine 349, cysteine 353, and cysteine 356. The disordered stretch occupies residues 635–677 (RPDQLVPAHQPPGTGKAAGTRRPVRGDGPKPQRFTTKGVRLVK).

The protein belongs to the UPF0313 family. [4Fe-4S] cluster serves as cofactor.

In Rhodopseudomonas palustris (strain ATCC BAA-98 / CGA009), this protein is UPF0313 protein RPA0679.